The sequence spans 289 residues: ATP synthase gamma chain (289 aa).

It belongs to the ATPase gamma chain family. In terms of assembly, F-type ATPases have 2 components, CF(1) - the catalytic core - and CF(0) - the membrane proton channel. CF(1) has five subunits: alpha(3), beta(3), gamma(1), delta(1), epsilon(1). CF(0) has three main subunits: a, b and c.

Its subcellular location is the cell inner membrane. In terms of biological role, produces ATP from ADP in the presence of a proton gradient across the membrane. The gamma chain is believed to be important in regulating ATPase activity and the flow of protons through the CF(0) complex. This Aromatoleum aromaticum (strain DSM 19018 / LMG 30748 / EbN1) (Azoarcus sp. (strain EbN1)) protein is ATP synthase gamma chain.